The primary structure comprises 383 residues: S-adenosylmethionine synthase (383 aa).

Position 15 (H15) interacts with ATP. D17 contributes to the Mg(2+) binding site. Residue E43 coordinates K(+). Residues E56 and Q99 each coordinate L-methionine. The tract at residues 99 to 109 is flexible loop; the sequence is QSPDINQGVDR. ATP-binding positions include 164–166, 230–231, D239, 245–246, A262, and K266; these read DAK, RF, and RK. L-methionine is bound at residue D239. K270 contributes to the L-methionine binding site.

It belongs to the AdoMet synthase family. Homotetramer; dimer of dimers. Mg(2+) serves as cofactor. It depends on K(+) as a cofactor.

Its subcellular location is the cytoplasm. It catalyses the reaction L-methionine + ATP + H2O = S-adenosyl-L-methionine + phosphate + diphosphate. Its pathway is amino-acid biosynthesis; S-adenosyl-L-methionine biosynthesis; S-adenosyl-L-methionine from L-methionine: step 1/1. Its function is as follows. Catalyzes the formation of S-adenosylmethionine (AdoMet) from methionine and ATP. The overall synthetic reaction is composed of two sequential steps, AdoMet formation and the subsequent tripolyphosphate hydrolysis which occurs prior to release of AdoMet from the enzyme. This is S-adenosylmethionine synthase from Pectobacterium carotovorum subsp. carotovorum (strain PC1).